A 344-amino-acid chain; its full sequence is L-rhamnose-proton symporter (344 aa).

The next 10 helical transmembrane spans lie at 4–24 (AITM…CFYA), 38–58 (WSVG…ALLL), 68–88 (FSLS…IGNI), 101–121 (MGIG…TPII), 137–157 (TLLG…AGQL), 175–195 (LVLA…MNAA), 214–234 (LPSY…FCFI), 259–279 (VLLS…YAWG), 290–310 (ISWM…GLVL), and 323–343 (VLSL…IGMA).

Belongs to the L-rhamnose transporter (TC 2.A.7.6) family.

It localises to the cell inner membrane. The catalysed reaction is L-rhamnopyranose(in) + H(+)(in) = L-rhamnopyranose(out) + H(+)(out). Uptake of L-rhamnose across the cytoplasmic membrane with the concomitant transport of protons into the cell (symport system). The protein is L-rhamnose-proton symporter of Escherichia coli (strain 55989 / EAEC).